Consider the following 83-residue polypeptide: U-actitoxin-Aeq6b (83 aa).

The signal sequence occupies residues 1–20; the sequence is MIYKAVFVCLVLVLLGDVFC. The propeptide occupies 21-36; that stretch reads SPRNSGGGTLNDNPFE. At proline 82 the chain carries Proline amide.

Contains 3 disulfide bonds. As to expression, expressed by acrorhagi.

The protein localises to the secreted. It localises to the nematocyst. Its function is as follows. Toxin. This is U-actitoxin-Aeq6b from Actinia equina (Beadlet anemone).